A 403-amino-acid polypeptide reads, in one-letter code: Eukaryotic initiation factor 4A (403 aa).

The tract at residues 1–20 is disordered; that stretch reads MDDRNEIPQDGPASMEPEGV. Residues 30 to 58 carry the Q motif motif; that stretch reads DNFDDMNLREELLRGIYGYGFEKPSAIQQ. The 171-residue stretch at 61-231 folds into the Helicase ATP-binding domain; the sequence is IIPCVRGRDV…RCFMRDPVSI (171 aa). 74–81 is a binding site for ATP; that stretch reads AQSGTGKT. A DEAD box motif is present at residues 179–182; it reads DEAD. In terms of domain architecture, Helicase C-terminal spans 242-403; the sequence is GIKQFYVNVK…EMPANIADLI (162 aa).

It belongs to the DEAD box helicase family. eIF4A subfamily. EIF4F is a multi-subunit complex, the composition of which varies with external and internal environmental conditions. It is composed of at least eIF4A, eIF4E1 and eIF4G1. Interacts with tud and vas. Interacts (via multiple contacts) with bam; the interaction is direct.

The protein localises to the cytoplasm. It localises to the cytoplasmic ribonucleoprotein granule. The enzyme catalyses ATP + H2O = ADP + phosphate + H(+). Its function is as follows. ATP-dependent RNA helicase which is a subunit of the eIF4F complex involved in cap recognition and is required for mRNA binding to ribosome. In the current model of translation initiation, eIF4A unwinds RNA secondary structures in the 5'-UTR of mRNAs which is necessary to allow efficient binding of the small ribosomal subunit, and subsequent scanning for the initiator codon. As a result, promotes cell proliferation and growth. Binds and antagonises the bam-bgcn complex; probably prevents bam mediated translational repression of shg/E-cadherin. Involved in germ cell formation. Involved in germline stem cell maintenance and proliferation; prevents differentiation. This chain is Eukaryotic initiation factor 4A, found in Drosophila melanogaster (Fruit fly).